A 1334-amino-acid chain; its full sequence is MSEAMDQPAGGPGNPRPGEGDDGSMEPGTCQELLHRLRELEAENSALAQANENQRETYERCLDEVANHVVQALLNQKDLREECIKLKKRVFDLERQNQMLSALFQQKLQLTTGSLPQIPLTPLQPPSEPPASPSLSSTEGPAAPLPLGHCAGQREVCWEQQLRPGGPGPPAAPPPALDALSPFLRKKAQILEVLRALEETDPLLLCSPATPWRPPGQGPGSPEPINGELCGPPQPEPSPWAPCLLLGPGNLGGLLHWERLLGGLGGEEDTGRPWGPSRGPPQAQGTSSGPNCAPGSSSSSSSDEAGDPNEAPSPDTLLGALARRQLNLGQLLEDTESYLQAFLAGAAGPLNGDHPGPGQSSSPDQAPPQLSKSKGLPKSAWGGGTPEAHRPGFGATSEGQGPLPFLSMFMGAGDAPLGSRPGHPHSSSQVKSKLQIGPPSPGEAQGPLLPSPARGLKFLKLPPTSEKSPSPGGPQLSPQLPRNSRIPCRNSGSDGSPSPLLARRGLGGGELSPEGAQGLPTSPSPCYTTPDSTQLRPPQSALSTTLSPGPVVSPCYENILDLSRSTFRGPSPEPPPSPLQVPTYPQLTLEVPQAPEVLRSPGVPPSPCLPESYPYGSPQEKSLDKAGSESPHPGRRTPGNSSKKPSQGSGRRPGDPGSTPLRDRLAALGKLKTGPEGALGSEKNGVPARPGTEKTRGPGKSGESAGDMVPSIHRPLEQLEAKGGIRGAVALGTNSLKQQEPGLMGDPGARVYSSHSMGARVDLEPVSPRSCLTKVELAKSRLAGALCPQVPRTPAKVPTSAPSLGKPNKSPHSSPTKLPSKSPTKVVPRPGAPLVTKESPKPDKGKGPPWADCGSTTAQSTPLVPGPTDPSQGPEGLAPHSAIEEKVMKGIEENVLRLQGQERAPGAEVKHRNTSSIASWFGLKKSKLPALNRRTEATKNKEGAGGGSPLRREVKMEARKLEAESLNISKLMAKAEDLRRALEEEKAYLSSRARPRPGGPAPGPNTGLGQVQGQLAGMYQGADTFMQQLLNRVDGKELPSKSWREPKPEYGDFQPVSSDPKSPWPACGPRNGLVGPLQGCGKPPGKPSSEPGRREEMPSEDSLAEPVPTSHFTACGSLTRTLDSGIGTFPPPDHGSSGTPSKNLPKTKPPRLDPPPGVPPARPPPLTKVPRRAHTLEREVPGIEELLVSGRHPSMPAFPALLPAAPGHRGHETCPDDPCEDPGPTPPVQLAKNWTFPNTRAAGSSSDPLMCPPRQLEGLPRTPMALPVDRKRSQEPSRPSPTPQGPPFGGSRTPSTSDMAEEGRVASGGPPGLETSESLSDSLYDSLSSCGSQG.

Disordered stretches follow at residues Met-1–Gly-28, Leu-115–Pro-146, Thr-210–Gln-234, Gly-266–Thr-316, and Pro-349–Ser-711. Residues Met-1–Glu-139 are mediates interaction with CDK5RAP2 and is required for homodimerization and microtubule bundle formation. Residues Gly-28–Gln-106 are a coiled coil. Over residues Pro-122–Ser-132 the composition is skewed to pro residues. Polar residues predominate over residues Gly-358–Lys-372. Ser-440, Ser-451, Ser-470, and Ser-477 each carry phosphoserine; by CDK1. Over residues Ser-468–Pro-481 the composition is skewed to low complexity. The (S/T)X(I/L)P motif 1 motif lies at Ser-484–Pro-487. Phosphoserine is present on residues Ser-493, Ser-496, and Ser-498. The segment covering Leu-519–Ser-547 has biased composition (polar residues). Phosphoserine; by CDK1 occurs at positions 571 and 577. Over residues Pro-638 to Ser-649 the composition is skewed to polar residues. Residue Thr-659 is modified to Phosphothreonine. The mediates interaction with beta-tubulin and is required for microtubule bundle formation stretch occupies residues Arg-750–Lys-1146. Ser-767 is modified (phosphoserine; by CDK1). The disordered stretch occupies residues Leu-782–Glu-884. The span at Ser-810–Lys-825 shows a compositional bias: low complexity. The (S/T)X(I/L)P motif 2 signature appears at Thr-816 to Pro-819. A (S/T)X(I/L)P motif 3; required for interaction with MAPRE1 motif is present at residues Ser-926–Pro-929. Disordered regions lie at residues Leu-931–Glu-953, Lys-986–Leu-1015, and Leu-1030–Ile-1183. Residues Arg-933–Glu-942 show a composition bias toward basic and acidic residues. A coiled-coil region spans residues Met-956–Arg-994. Basic and acidic residues predominate over residues Val-1033 to Tyr-1050. Over residues Gly-1079–Glu-1090 the composition is skewed to low complexity. The segment covering Ser-1110–Leu-1122 has biased composition (polar residues). A compositionally biased stretch (pro residues) spans Leu-1152 to Thr-1167. A Phosphoserine modification is found at Ser-1194. A compositionally biased stretch (low complexity) spans Ala-1197 to Pro-1206. Positions Ala-1197–Gly-1334 are disordered. The span at Thr-1235–Asp-1247 shows a compositional bias: polar residues. Over residues Leu-1313–Gly-1334 the composition is skewed to low complexity.

Homodimer. Interacts with CDK5RAP2. Interacts with MAPRE1. Interacts with beta-tubulin. CDK1/Cyclin B-dependent phosphorylation mediates its dissociation from centrosomes during mitosis.

The protein localises to the cytoplasm. The protein resides in the cytoskeleton. It is found in the microtubule organizing center. Its subcellular location is the centrosome. Its function is as follows. Regulates microtubule organization and stabilization. Promotes microtubule growth and bundling formation and stabilizes microtubules by increasing intense acetylation of microtubules. Both tubulin-binding and homodimer formation are required for NCKAP5L-mediated microtubule bundle formation. The protein is Nck-associated protein 5-like of Homo sapiens (Human).